Consider the following 276-residue polypeptide: SKA complex subunit 1 homolog (276 aa).

Positions 48-78 (VDVSLTAMEAQLQAVRRRLQEEREAFPKAKK) form a coiled coil.

The protein belongs to the SKA1 family.

This Oryza sativa subsp. japonica (Rice) protein is SKA complex subunit 1 homolog.